A 233-amino-acid chain; its full sequence is Large ribosomal subunit protein uL1 (233 aa).

It belongs to the universal ribosomal protein uL1 family. In terms of assembly, part of the 50S ribosomal subunit.

Its function is as follows. Binds directly to 23S rRNA. The L1 stalk is quite mobile in the ribosome, and is involved in E site tRNA release. In terms of biological role, protein L1 is also a translational repressor protein, it controls the translation of the L11 operon by binding to its mRNA. This Geobacillus thermodenitrificans (strain NG80-2) protein is Large ribosomal subunit protein uL1.